Consider the following 327-residue polypeptide: Altered inheritance rate of mitochondria protein 25 (327 aa).

It belongs to the phospholipid scramblase family.

It localises to the mitochondrion. The polypeptide is Altered inheritance rate of mitochondria protein 25 (AIM25) (Saccharomyces cerevisiae (strain ATCC 204508 / S288c) (Baker's yeast)).